Reading from the N-terminus, the 358-residue chain is Aminodeoxyfutalosine deaminase (358 aa).

The Zn(2+) site is built by His32 and His34. Arg87, Asp154, and Gly188 together coordinate substrate. His215 contributes to the Zn(2+) binding site. Catalysis depends on Glu218, which acts as the Proton donor. Asp296 provides a ligand contact to Zn(2+).

It belongs to the metallo-dependent hydrolases superfamily. Adenosine and AMP deaminases family. It depends on Zn(2+) as a cofactor.

The enzyme catalyses 6-amino-6-deoxyfutalosine + H2O + H(+) = futalosine + NH4(+). Its pathway is quinol/quinone metabolism; menaquinone biosynthesis. Its function is as follows. Catalyzes the deamination of aminodeoxyfutalosine (AFL) into futalosine (FL), a step in the biosynthesis of menaquinone (MK, vitamin K2). To a lesser extent, can also deaminate adenosine, 5'-methylthioadenosine, 5'-deoxyadenosine, and 2'-deoxyadenosine. This is Aminodeoxyfutalosine deaminase (add2) from Streptomyces avermitilis (strain ATCC 31267 / DSM 46492 / JCM 5070 / NBRC 14893 / NCIMB 12804 / NRRL 8165 / MA-4680).